We begin with the raw amino-acid sequence, 294 residues long: Bifunctional protein FolD (294 aa).

NADP(+)-binding positions include 169-171 (GRG), Thr196, and Val237.

It belongs to the tetrahydrofolate dehydrogenase/cyclohydrolase family. Homodimer.

The enzyme catalyses (6R)-5,10-methylene-5,6,7,8-tetrahydrofolate + NADP(+) = (6R)-5,10-methenyltetrahydrofolate + NADPH. The catalysed reaction is (6R)-5,10-methenyltetrahydrofolate + H2O = (6R)-10-formyltetrahydrofolate + H(+). Its pathway is one-carbon metabolism; tetrahydrofolate interconversion. In terms of biological role, catalyzes the oxidation of 5,10-methylenetetrahydrofolate to 5,10-methenyltetrahydrofolate and then the hydrolysis of 5,10-methenyltetrahydrofolate to 10-formyltetrahydrofolate. This chain is Bifunctional protein FolD, found in Renibacterium salmoninarum (strain ATCC 33209 / DSM 20767 / JCM 11484 / NBRC 15589 / NCIMB 2235).